We begin with the raw amino-acid sequence, 520 residues long: Type I restriction enzyme EcoR124I/EcoR124II methylase subunit (520 aa).

Residues 10-190 form an N-terminal domain region; sequence AELHRQIWQI…YEFLISNYAA (181 aa). S-adenosyl-L-methionine is bound by residues 198–203, 230–232, and Glu254; these read EFFTPQ and SGS. The interval 198 to 473 is catalytic domain; sequence EFFTPQHVSK…NDYNLSVSSY (276 aa). Positions 481-510 are C-terminal tail; that stretch reads EIIDIAELNAELKTTVSKIDQLRKDIDAIV.

Belongs to the N(4)/N(6)-methyltransferase family. In terms of assembly, the type I restriction/modification system is composed of three polypeptides R, M and S; the restriction enzyme has stoichiometry R(2)M(2)S(1) while the methyltransferase is M(2)S(1). There is an equilibrium between R(2)M(2)S(1) and R(1)M(2)S(1); the latter is methylation and translocation proficient but restriction deficient. (Microbial infection) Holoenenzyme interacts with Escherichia phage T7 protein Ocr; this interaction leads to the inhibition of the restriction activity, but may still allow methylation and translocation.

The catalysed reaction is a 2'-deoxyadenosine in DNA + S-adenosyl-L-methionine = an N(6)-methyl-2'-deoxyadenosine in DNA + S-adenosyl-L-homocysteine + H(+). The subtype gamma methyltransferase (M) subunit of a type I restriction enzyme. The M and S subunits together form a methyltransferase (MTase) that methylates A-3 on the top and bottom strand of the sequence 5'-GAAN(6)RTCG-3' (for EcoR124I) and 5'-GAAN(7)RTCG-3' (for EcoR124II). In the presence of the R subunit the complex can also act as an endonuclease, binding to the same target sequence but cutting the DNA some distance from this site. Whether the DNA is cut or modified depends on the methylation state of the target sequence. When the target site is unmodified, the DNA is cut. When the target site is hemimethylated, the complex acts as a maintenance MTase modifying the DNA so that both strands become methylated. After locating a non-methylated recognition site, the enzyme complex serves as a molecular motor that translocates DNA in an ATP-dependent manner until a collision occurs that triggers cleavage. The R(1)M(2)S(1) complex translocates an average of 555 bp/second on nicked DNA; the R(2)M(2)S(1) complex translocates at double that speed. The 2 R subunit motors are independent and track along the helical pitch of the DNA, inducing positive supercoiling ahead of themselves. The chain is Type I restriction enzyme EcoR124I/EcoR124II methylase subunit (hsdM) from Escherichia coli.